The following is a 488-amino-acid chain: Bifunctional protein GlmU (488 aa).

The pyrophosphorylase stretch occupies residues 1–237 (MPRTRTPLAA…AEEASGVNDR (237 aa)). UDP-N-acetyl-alpha-D-glucosamine-binding positions include 13-16 (LAAG), Lys-27, Gln-82, 87-88 (GT), 110-112 (SGD), Gly-149, Glu-164, Asn-179, and Asn-235. Residue Asp-112 coordinates Mg(2+). A Mg(2+)-binding site is contributed by Asn-235. Positions 238-258 (IELARANRVMVGRLAEAFMRA) are linker. Positions 259–488 (GVTIEDPARF…KGRPAARRAS (230 aa)) are N-acetyltransferase. 2 residues coordinate UDP-N-acetyl-alpha-D-glucosamine: Arg-341 and Lys-359. Residue His-371 is the Proton acceptor of the active site. Positions 374 and 385 each coordinate UDP-N-acetyl-alpha-D-glucosamine. Residues Ala-388, 394–395 (NY), Ser-413, Ala-431, and Arg-448 each bind acetyl-CoA. Residues 459–488 (AQRQAEKQMKGTATGPAPARKGRPAARRAS) are disordered. Residues 478–488 (RKGRPAARRAS) show a composition bias toward basic residues.

The protein in the N-terminal section; belongs to the N-acetylglucosamine-1-phosphate uridyltransferase family. It in the C-terminal section; belongs to the transferase hexapeptide repeat family. Homotrimer. Mg(2+) is required as a cofactor.

It localises to the cytoplasm. The enzyme catalyses alpha-D-glucosamine 1-phosphate + acetyl-CoA = N-acetyl-alpha-D-glucosamine 1-phosphate + CoA + H(+). The catalysed reaction is N-acetyl-alpha-D-glucosamine 1-phosphate + UTP + H(+) = UDP-N-acetyl-alpha-D-glucosamine + diphosphate. Its pathway is nucleotide-sugar biosynthesis; UDP-N-acetyl-alpha-D-glucosamine biosynthesis; N-acetyl-alpha-D-glucosamine 1-phosphate from alpha-D-glucosamine 6-phosphate (route II): step 2/2. It participates in nucleotide-sugar biosynthesis; UDP-N-acetyl-alpha-D-glucosamine biosynthesis; UDP-N-acetyl-alpha-D-glucosamine from N-acetyl-alpha-D-glucosamine 1-phosphate: step 1/1. The protein operates within bacterial outer membrane biogenesis; LPS lipid A biosynthesis. Its function is as follows. Catalyzes the last two sequential reactions in the de novo biosynthetic pathway for UDP-N-acetylglucosamine (UDP-GlcNAc). The C-terminal domain catalyzes the transfer of acetyl group from acetyl coenzyme A to glucosamine-1-phosphate (GlcN-1-P) to produce N-acetylglucosamine-1-phosphate (GlcNAc-1-P), which is converted into UDP-GlcNAc by the transfer of uridine 5-monophosphate (from uridine 5-triphosphate), a reaction catalyzed by the N-terminal domain. The chain is Bifunctional protein GlmU from Anaeromyxobacter dehalogenans (strain 2CP-C).